Consider the following 213-residue polypeptide: 3-demethoxyubiquinol 3-hydroxylase (213 aa).

Fe cation is bound by residues glutamate 62, glutamate 92, histidine 95, glutamate 144, glutamate 176, and histidine 179.

The protein belongs to the COQ7 family. The cofactor is Fe cation.

It localises to the cell membrane. The enzyme catalyses a 5-methoxy-2-methyl-3-(all-trans-polyprenyl)benzene-1,4-diol + AH2 + O2 = a 3-demethylubiquinol + A + H2O. It participates in cofactor biosynthesis; ubiquinone biosynthesis. Catalyzes the hydroxylation of 2-nonaprenyl-3-methyl-6-methoxy-1,4-benzoquinol during ubiquinone biosynthesis. The polypeptide is 3-demethoxyubiquinol 3-hydroxylase (Legionella pneumophila (strain Paris)).